The chain runs to 215 residues: Nucleoside triphosphate pyrophosphatase (215 aa).

The Proton acceptor role is filled by Asp80.

This sequence belongs to the Maf family. The cofactor is a divalent metal cation.

Its subcellular location is the cytoplasm. The enzyme catalyses a ribonucleoside 5'-triphosphate + H2O = a ribonucleoside 5'-phosphate + diphosphate + H(+). It catalyses the reaction a 2'-deoxyribonucleoside 5'-triphosphate + H2O = a 2'-deoxyribonucleoside 5'-phosphate + diphosphate + H(+). Its function is as follows. Nucleoside triphosphate pyrophosphatase. May have a dual role in cell division arrest and in preventing the incorporation of modified nucleotides into cellular nucleic acids. This Leifsonia xyli subsp. xyli (strain CTCB07) protein is Nucleoside triphosphate pyrophosphatase.